The sequence spans 507 residues: Probable Xaa-Pro aminopeptidase TRV_02643 (507 aa).

Mn(2+) is bound by residues D275, D286, E434, and E478.

Belongs to the peptidase M24B family. It depends on Mn(2+) as a cofactor.

It carries out the reaction Release of any N-terminal amino acid, including proline, that is linked to proline, even from a dipeptide or tripeptide.. In terms of biological role, catalyzes the removal of a penultimate prolyl residue from the N-termini of peptides. This is Probable Xaa-Pro aminopeptidase TRV_02643 from Trichophyton verrucosum (strain HKI 0517).